Here is a 456-residue protein sequence, read N- to C-terminus: MHRYKKEASNLIKLATPVLIASVAQTGMGFVDTVMAGGVSATDMAAVSVAASIWLPSILFGIGLLMALVPVVAQLNGAGKREQVPFEIQQGAVMALLISIPIIGVLFQTQWILGYMNVDAVMATKTIGYIHAVMFAVPAFLLFQTLRSLTDGLSLTKPAMVIGFIGLLLNIPLNWMFVYGKLGAPALGGVGCGVATAIVYWIMFLLLLFYVTTSHRLRQVQLFTTFHPPQLNAQVKLFKLGFPVAAALFFEVTLFAVVALLVAPLGSTVVAAHQVAINFSSLVFMLPMSIGAATSIRVGHMLGEKSTEGARIASHVGILVGLSTAVFTALLTVILREQIALLYTDNRVVITLAMQLLIFTAIYQCTDAIQVIAAGALRGYKDMRAIFNRTFIAYWLLGLPTGYVLGLTDWIVEPMGAQGFWIGFIVGLSSAAAMLGVRLHWLHRQNDEIQLNYEAR.

12 helical membrane-spanning segments follow: residues Leu-11–Val-31, Ile-53–Ala-73, Val-93–Leu-113, Thr-126–Leu-146, Ala-159–Tyr-179, Gly-189–Phe-209, Phe-242–Val-262, Ala-276–Ile-296, His-315–Leu-335, Leu-356–Ala-376, Phe-391–Ile-411, and Ala-417–Val-437.

This sequence belongs to the multi antimicrobial extrusion (MATE) (TC 2.A.66.1) family.

The protein localises to the cell inner membrane. Functionally, multidrug efflux pump that functions as a Na(+)/drug antiporter. This Vibrio vulnificus (strain CMCP6) protein is Multidrug resistance protein NorM (norM).